The sequence spans 181 residues: 28 kDa heat- and acid-stable phosphoprotein (181 aa).

A compositionally biased stretch (basic residues) spans 1-14; that stretch reads MPKGGRKGGHKGRA. The interval 1 to 117 is disordered; the sequence is MPKGGRKGGH…SRREREEIEK (117 aa). Thr18 bears the Phosphothreonine mark. Position 19 is a phosphoserine (Ser19). Positions 30 to 59 are enriched in basic and acidic residues; the sequence is EKQKAREEEEQKEGGDGAAGDPKKEKKSLD. Lys52 is covalently cross-linked (Glycyl lysine isopeptide (Lys-Gly) (interchain with G-Cter in SUMO2)). 3 positions are modified to phosphoserine: Ser57, Ser60, and Ser63. The span at 60–69 shows a compositional bias: acidic residues; the sequence is SDESEDEEDD. Position 70 is a phosphotyrosine (Tyr70). The segment covering 102–117 has biased composition (basic and acidic residues); it reads DGPKELSRREREEIEK. An N6-methyllysine modification is found at Lys126. 2 positions are modified to N6-acetyllysine: Lys132 and Lys164. Basic and acidic residues predominate over residues 151-167; that stretch reads EEAARKKEEERKAKDDA. The interval 151–181 is disordered; the sequence is EEAARKKEEERKAKDDATLSGKRMQSLSLNK. Phosphoserine occurs at positions 176 and 178.

The protein belongs to the PDAP1 family.

Its function is as follows. Enhances PDGFA-stimulated cell growth in fibroblasts, but inhibits the mitogenic effect of PDGFB. This chain is 28 kDa heat- and acid-stable phosphoprotein (PDAP1), found in Homo sapiens (Human).